The chain runs to 61 residues: Conotoxin Vn5.3 (61 aa).

The first 19 residues, 1–19 (MHCLPVFVILLLLIASAPG), serve as a signal peptide directing secretion. Residues 20–50 (VDVQPKTKNFMTRASLRDFAKKTPKRLSKLR) constitute a propeptide that is removed on maturation.

The protein belongs to the conotoxin T superfamily. Contains 2 disulfide bonds that can be either 'C1-C3, C2-C4' or 'C1-C4, C2-C3', since these disulfide connectivities have been observed for conotoxins with cysteine framework V (for examples, see AC P0DQQ7 and AC P81755). In terms of tissue distribution, expressed by the venom duct.

Its subcellular location is the secreted. In Conus ventricosus (Mediterranean cone), this protein is Conotoxin Vn5.3.